A 388-amino-acid polypeptide reads, in one-letter code: DNA primase small subunit PriS (388 aa).

Residues D100, D102, and D288 contribute to the active site.

This sequence belongs to the eukaryotic-type primase small subunit family. In terms of assembly, heterodimer of a small subunit (PriS) and a large subunit (PriL). Mg(2+) is required as a cofactor. It depends on Mn(2+) as a cofactor.

Catalytic subunit of DNA primase, an RNA polymerase that catalyzes the synthesis of short RNA molecules used as primers for DNA polymerase during DNA replication. The small subunit contains the primase catalytic core and has DNA synthesis activity on its own. Binding to the large subunit stabilizes and modulates the activity, increasing the rate of DNA synthesis while decreasing the length of the DNA fragments, and conferring RNA synthesis capability. The DNA polymerase activity may enable DNA primase to also catalyze primer extension after primer synthesis. May also play a role in DNA repair. The chain is DNA primase small subunit PriS from Methanospirillum hungatei JF-1 (strain ATCC 27890 / DSM 864 / NBRC 100397 / JF-1).